Reading from the N-terminus, the 385-residue chain is Cytochrome b (385 aa).

A run of 4 helical transmembrane segments spans residues Phe32–Met52, Trp76–Gly98, Thr113–Val133, and Phe179–Ile199. 2 residues coordinate heme b: His82 and His96. Heme b contacts are provided by His183 and His197. An a ubiquinone-binding site is contributed by His202. The next 4 helical transmembrane spans lie at Phe226–Phe246, Leu290–Asp310, Leu322–Ala342, and Phe349–Pro369.

This sequence belongs to the cytochrome b family. In terms of assembly, fungal cytochrome b-c1 complex contains 10 subunits; 3 respiratory subunits, 2 core proteins and 5 low-molecular weight proteins. Cytochrome b-c1 complex is a homodimer. The cofactor is heme b.

It localises to the mitochondrion inner membrane. In terms of biological role, component of the ubiquinol-cytochrome c reductase complex (complex III or cytochrome b-c1 complex) that is part of the mitochondrial respiratory chain. The b-c1 complex mediates electron transfer from ubiquinol to cytochrome c. Contributes to the generation of a proton gradient across the mitochondrial membrane that is then used for ATP synthesis. In Aspergillus tubingensis, this protein is Cytochrome b (cob).